The primary structure comprises 328 residues: 4-hydroxythreonine-4-phosphate dehydrogenase (328 aa).

Substrate is bound by residues histidine 135 and threonine 136. Residues histidine 165, histidine 210, and histidine 265 each contribute to the a divalent metal cation site. 3 residues coordinate substrate: lysine 273, asparagine 282, and arginine 291.

Belongs to the PdxA family. As to quaternary structure, homodimer. Zn(2+) serves as cofactor. Requires Mg(2+) as cofactor. Co(2+) is required as a cofactor.

Its subcellular location is the cytoplasm. The enzyme catalyses 4-(phosphooxy)-L-threonine + NAD(+) = 3-amino-2-oxopropyl phosphate + CO2 + NADH. The protein operates within cofactor biosynthesis; pyridoxine 5'-phosphate biosynthesis; pyridoxine 5'-phosphate from D-erythrose 4-phosphate: step 4/5. In terms of biological role, catalyzes the NAD(P)-dependent oxidation of 4-(phosphooxy)-L-threonine (HTP) into 2-amino-3-oxo-4-(phosphooxy)butyric acid which spontaneously decarboxylates to form 3-amino-2-oxopropyl phosphate (AHAP). This chain is 4-hydroxythreonine-4-phosphate dehydrogenase, found in Enterobacter sp. (strain 638).